Consider the following 673-residue polypeptide: eEF1A lysine and N-terminal methyltransferase homolog (673 aa).

It belongs to the methyltransferase superfamily.

The catalysed reaction is L-lysyl-[protein] + S-adenosyl-L-methionine = N(6)-methyl-L-lysyl-[protein] + S-adenosyl-L-homocysteine + H(+). The enzyme catalyses N(6)-methyl-L-lysyl-[protein] + S-adenosyl-L-methionine = N(6),N(6)-dimethyl-L-lysyl-[protein] + S-adenosyl-L-homocysteine + H(+). It catalyses the reaction N-terminal glycyl-L-lysyl-L-glutamyl-[protein] + 3 S-adenosyl-L-methionine = N-terminal N,N,N-trimethyl-glycyl-L-lysyl-L-glutamyl-[protein] + 3 S-adenosyl-L-homocysteine + 3 H(+). Its function is as follows. Dual methyltransferase. It catalyzes N-terminal methylation of target proteins via its C-terminus. It catalyzes dimethylation on lysine residues of target proteins via its N-terminus. This chain is eEF1A lysine and N-terminal methyltransferase homolog, found in Drosophila melanogaster (Fruit fly).